We begin with the raw amino-acid sequence, 545 residues long: Glucose-6-phosphate isomerase (545 aa).

The active-site Proton donor is glutamate 351. Catalysis depends on residues histidine 382 and lysine 510.

The protein belongs to the GPI family.

The protein resides in the cytoplasm. It catalyses the reaction alpha-D-glucose 6-phosphate = beta-D-fructose 6-phosphate. Its pathway is carbohydrate biosynthesis; gluconeogenesis. It participates in carbohydrate degradation; glycolysis; D-glyceraldehyde 3-phosphate and glycerone phosphate from D-glucose: step 2/4. Its function is as follows. Catalyzes the reversible isomerization of glucose-6-phosphate to fructose-6-phosphate. This is Glucose-6-phosphate isomerase from Helicobacter acinonychis (strain Sheeba).